The following is a 376-amino-acid chain: Erythronate-4-phosphate dehydrogenase (376 aa).

Positions 45 and 67 each coordinate substrate. An NAD(+)-binding site is contributed by Asp-147. The active site involves Arg-209. An NAD(+)-binding site is contributed by Asp-233. The active site involves Glu-238. His-255 functions as the Proton donor in the catalytic mechanism. Gly-258 lines the NAD(+) pocket. Tyr-259 contributes to the substrate binding site.

Belongs to the D-isomer specific 2-hydroxyacid dehydrogenase family. PdxB subfamily. In terms of assembly, homodimer.

The protein localises to the cytoplasm. The catalysed reaction is 4-phospho-D-erythronate + NAD(+) = (R)-3-hydroxy-2-oxo-4-phosphooxybutanoate + NADH + H(+). Its pathway is cofactor biosynthesis; pyridoxine 5'-phosphate biosynthesis; pyridoxine 5'-phosphate from D-erythrose 4-phosphate: step 2/5. Functionally, catalyzes the oxidation of erythronate-4-phosphate to 3-hydroxy-2-oxo-4-phosphonooxybutanoate. In Shewanella loihica (strain ATCC BAA-1088 / PV-4), this protein is Erythronate-4-phosphate dehydrogenase.